The chain runs to 37 residues: MKVKPSVKKICDKCKVIRRHGRVMIICENLRHKQRQG.

This sequence belongs to the bacterial ribosomal protein bL36 family.

The sequence is that of Large ribosomal subunit protein bL36B from Kineococcus radiotolerans (strain ATCC BAA-149 / DSM 14245 / SRS30216).